The sequence spans 622 residues: Iron transport multicopper oxidase FET3 (622 aa).

An N-terminal signal peptide occupies residues 1–22; it reads MRPKLLSVEAALFLALPELARA. At 23-553 the chain is on the extracellular side; the sequence is ATRKFDFEIG…NTLPPGFTPR (531 aa). Plastocyanin-like domains lie at 31–146, 156–303, and 363–498; these read IGWV…VHDK, EEVV…VYDK, and YTEA…VEDP. An N-linked (GlcNAc...) asparagine glycan is attached at Asn-76. 2 residues coordinate Cu cation: His-82 and His-84. Asn-89 and Asn-114 each carry an N-linked (GlcNAc...) asparagine glycan. 2 residues coordinate Cu cation: His-126 and His-128. Asn-196, Asn-200, and Asn-294 each carry an N-linked (GlcNAc...) asparagine glycan. Cu cation contacts are provided by His-414, His-417, and His-419. Residue Asn-440 is glycosylated (N-linked (GlcNAc...) asparagine). Cu cation-binding residues include His-479, Cys-480, His-481, and His-485. The chain crosses the membrane as a helical span at residues 554–574; that stretch reads GIVALVFSCICGILGVAVVAW. At 575 to 622 the chain is on the cytoplasmic side; the sequence is YGFSAPVGSTSAGALSAGLVENDSGDVHSAQKGPQETVVSPTGDARSH. A disordered region spans residues 597–622; sequence DSGDVHSAQKGPQETVVSPTGDARSH.

It belongs to the multicopper oxidase family.

Its subcellular location is the cell membrane. In terms of biological role, cell surface ferroxidase; part of the reductive iron assimilatory system (RIA), a siderophore-independent iron acquisition process. Required to oxidize Fe(2+) and release it from the transporter. Seems not to be involved in virulence. The polypeptide is Iron transport multicopper oxidase FET3 (Gibberella zeae (strain ATCC MYA-4620 / CBS 123657 / FGSC 9075 / NRRL 31084 / PH-1) (Wheat head blight fungus)).